The chain runs to 407 residues: UPF0597 protein NAMH_0191 (407 aa).

Belongs to the UPF0597 family.

This Nautilia profundicola (strain ATCC BAA-1463 / DSM 18972 / AmH) protein is UPF0597 protein NAMH_0191.